Here is a 585-residue protein sequence, read N- to C-terminus: Aspartate--tRNA(Asp/Asn) ligase (585 aa).

Glu173 contributes to the L-aspartate binding site. The tract at residues 197–200 is aspartate; sequence QLFK. Arg219 provides a ligand contact to L-aspartate. ATP-binding positions include 219–221 and Gln228; that span reads RDE. His447 serves as a coordination point for L-aspartate. Glu477 provides a ligand contact to ATP. Residue Arg484 participates in L-aspartate binding. 529 to 532 lines the ATP pocket; it reads GFDR.

It belongs to the class-II aminoacyl-tRNA synthetase family. Type 1 subfamily. In terms of assembly, homodimer.

The protein localises to the cytoplasm. It catalyses the reaction tRNA(Asx) + L-aspartate + ATP = L-aspartyl-tRNA(Asx) + AMP + diphosphate. Aspartyl-tRNA synthetase with relaxed tRNA specificity since it is able to aspartylate not only its cognate tRNA(Asp) but also tRNA(Asn). Reaction proceeds in two steps: L-aspartate is first activated by ATP to form Asp-AMP and then transferred to the acceptor end of tRNA(Asp/Asn). In Campylobacter concisus (strain 13826), this protein is Aspartate--tRNA(Asp/Asn) ligase.